The primary structure comprises 213 residues: Uridine kinase (213 aa).

Residue 15–22 (GASASGKS) participates in ATP binding.

Belongs to the uridine kinase family.

The protein resides in the cytoplasm. The enzyme catalyses uridine + ATP = UMP + ADP + H(+). It catalyses the reaction cytidine + ATP = CMP + ADP + H(+). The protein operates within pyrimidine metabolism; CTP biosynthesis via salvage pathway; CTP from cytidine: step 1/3. It participates in pyrimidine metabolism; UMP biosynthesis via salvage pathway; UMP from uridine: step 1/1. The protein is Uridine kinase of Klebsiella pneumoniae (strain 342).